A 381-amino-acid polypeptide reads, in one-letter code: Chaperone protein DnaJ (381 aa).

Residues 4–69 (DYYEILGVTR…QKRAAYDRFG (66 aa)) form the J domain. The CR-type zinc finger occupies 135 to 213 (GKTAQINIPS…CQGTRRVEKN (79 aa)). Residues C148, C151, C165, C168, C187, C190, C201, and C204 each coordinate Zn(2+). 4 CXXCXGXG motif repeats span residues 148-155 (CDACEGSG), 165-172 (CGTCHGAG), 187-194 (CPVCHGRG), and 201-208 (CPKCQGTR).

This sequence belongs to the DnaJ family. As to quaternary structure, homodimer. The cofactor is Zn(2+).

Its subcellular location is the cytoplasm. In terms of biological role, participates actively in the response to hyperosmotic and heat shock by preventing the aggregation of stress-denatured proteins and by disaggregating proteins, also in an autonomous, DnaK-independent fashion. Unfolded proteins bind initially to DnaJ; upon interaction with the DnaJ-bound protein, DnaK hydrolyzes its bound ATP, resulting in the formation of a stable complex. GrpE releases ADP from DnaK; ATP binding to DnaK triggers the release of the substrate protein, thus completing the reaction cycle. Several rounds of ATP-dependent interactions between DnaJ, DnaK and GrpE are required for fully efficient folding. Also involved, together with DnaK and GrpE, in the DNA replication of plasmids through activation of initiation proteins. The sequence is that of Chaperone protein DnaJ from Bartonella henselae (strain ATCC 49882 / DSM 28221 / CCUG 30454 / Houston 1) (Rochalimaea henselae).